The chain runs to 227 residues: MTSVCFLAGRTAALIPAAGSGTRLGRGPKAFVEVAGQSLLARSVAALAPWVDEVLVALPEGFPLPPGLPAQAILGGTTRQESVWRLLHATTADVVLVHDAARPFLPGAVVTALLEAVSETGAATAALPVADTLVRGERGRWADLVPREGLWAVQTPQAFRRALLLRAHAAARAEGFGATDDAGLIARLGLPVRLVPGDARLFKVTTPGDLALAQAVAAVWDATCDAP.

It belongs to the IspD/TarI cytidylyltransferase family. IspD subfamily.

The catalysed reaction is 2-C-methyl-D-erythritol 4-phosphate + CTP + H(+) = 4-CDP-2-C-methyl-D-erythritol + diphosphate. It functions in the pathway isoprenoid biosynthesis; isopentenyl diphosphate biosynthesis via DXP pathway; isopentenyl diphosphate from 1-deoxy-D-xylulose 5-phosphate: step 2/6. Functionally, catalyzes the formation of 4-diphosphocytidyl-2-C-methyl-D-erythritol from CTP and 2-C-methyl-D-erythritol 4-phosphate (MEP). The sequence is that of 2-C-methyl-D-erythritol 4-phosphate cytidylyltransferase from Deinococcus geothermalis (strain DSM 11300 / CIP 105573 / AG-3a).